The primary structure comprises 113 residues: MGCNVMMELDYGGRAAWLAFHITNFDRSDLETILRGARVCNTWQDQRLSVYLVGRDCNLLRPFVQAAKFIHNTRRGQTLTHWFTKNIVFSSTGQETEPPIDPTCELLVELISG.

Belongs to the pneumovirus non-structural protein 1 family.

The protein localises to the host cytoplasm. It localises to the host mitochondrion. Functionally, may play a minor role in antagonizing the type I IFN-mediated antiviral response. Additionally, NS1 may serve some inhibitory role in viral transcription and RNA replication. This Mus musculus (Mouse) protein is Non-structural protein 1 (1C).